The primary structure comprises 533 residues: Protein trichome birefringence-like 18 (533 aa).

A helical; Signal-anchor for type II membrane protein membrane pass occupies residues 21-41; it reads VSTVAIAIGGLASFFVFGLLL. The segment at 93-171 is disordered; that stretch reads SDSSSGLPVV…PDDVSETASA (79 aa). Basic and acidic residues predominate over residues 113–154; that stretch reads SSDRKLETPLTQEKEDLVSSDITEKTDVQSGERETNVSKAED. The short motif at 248 to 250 is the GDS motif element; it reads GDS. The tract at residues 475–502 is disordered; that stretch reads HDGHPGPFRSPDPNKITKRGPDGRPPPQ. The short motif at 503–517 is the DCXHWCLPGXXDXWN motif element; that stretch reads DCLHWCMPGPVDTWN.

The protein belongs to the PC-esterase family. TBL subfamily.

It localises to the membrane. May act as a bridging protein that binds pectin and other cell wall polysaccharides. Probably involved in maintaining esterification of pectins. May be involved in the specific O-acetylation of cell wall polymers. The sequence is that of Protein trichome birefringence-like 18 (TBL18) from Arabidopsis thaliana (Mouse-ear cress).